Reading from the N-terminus, the 338-residue chain is Lipoate-protein ligase A (338 aa).

The BPL/LPL catalytic domain maps to 29–216 (PTTQRVLFLW…AFFDYFGEQC (188 aa)). Residues Arg-71, 76-79 (GAVF), and Lys-134 each bind ATP. Lys-134 contacts (R)-lipoate.

This sequence belongs to the LplA family. As to quaternary structure, monomer.

The protein resides in the cytoplasm. It catalyses the reaction L-lysyl-[lipoyl-carrier protein] + (R)-lipoate + ATP = N(6)-[(R)-lipoyl]-L-lysyl-[lipoyl-carrier protein] + AMP + diphosphate + H(+). It participates in protein modification; protein lipoylation via exogenous pathway; protein N(6)-(lipoyl)lysine from lipoate: step 1/2. It functions in the pathway protein modification; protein lipoylation via exogenous pathway; protein N(6)-(lipoyl)lysine from lipoate: step 2/2. Catalyzes both the ATP-dependent activation of exogenously supplied lipoate to lipoyl-AMP and the transfer of the activated lipoyl onto the lipoyl domains of lipoate-dependent enzymes. The chain is Lipoate-protein ligase A from Pectobacterium carotovorum subsp. carotovorum (strain PC1).